The following is a 296-amino-acid chain: L-fucono-1,5-lactonase (296 aa).

It belongs to the metallo-dependent hydrolases superfamily. As to quaternary structure, monomer. Requires Does not require a divalent metal for activity. The purified enzyme contains Zn(2+), but the addition of chelators does not diminish the catalytic activity of the enzyme, indicating that it does not require a divalent cation for substrate turnover. as cofactor.

It carries out the reaction L-fucono-1,5-lactone + H2O = L-fuconate + H(+). The enzyme catalyses L-fucono-1,4-lactone + H2O = L-fuconate + H(+). It catalyses the reaction D-arabinono-1,4-lactone + H2O = D-arabinonate + H(+). The catalysed reaction is L-xylono-1,4-lactone + H2O = L-xylonate + H(+). It carries out the reaction L-galactono-1,4-lactone + H2O = L-galactonate + H(+). Its pathway is carbohydrate degradation; L-fucose degradation. Its function is as follows. L-fucono-1,5-lactonase involved in an L-fucose degradation pathway. Catalyzes the hydrolysis of L-fucono-1,5-lactone to L-fuconate. L-fucono-1,5-lactone is the best substrate, but the enzyme can also hydrolyze L-fucono-1,4-lactone, L-galactono-1,4-lactone D-arabinono-1,4-lactone and L-xylono-1,4-lactone. The chain is L-fucono-1,5-lactonase from Burkholderia multivorans (strain ATCC 17616 / 249).